Reading from the N-terminus, the 225-residue chain is Enolase-phosphatase E1 (225 aa).

It belongs to the HAD-like hydrolase superfamily. MasA/MtnC family. Monomer. The cofactor is Mg(2+).

It carries out the reaction 5-methylsulfanyl-2,3-dioxopentyl phosphate + H2O = 1,2-dihydroxy-5-(methylsulfanyl)pent-1-en-3-one + phosphate. Its pathway is amino-acid biosynthesis; L-methionine biosynthesis via salvage pathway; L-methionine from S-methyl-5-thio-alpha-D-ribose 1-phosphate: step 3/6. It functions in the pathway amino-acid biosynthesis; L-methionine biosynthesis via salvage pathway; L-methionine from S-methyl-5-thio-alpha-D-ribose 1-phosphate: step 4/6. Functionally, bifunctional enzyme that catalyzes the enolization of 2,3-diketo-5-methylthiopentyl-1-phosphate (DK-MTP-1-P) into the intermediate 2-hydroxy-3-keto-5-methylthiopentenyl-1-phosphate (HK-MTPenyl-1-P), which is then dephosphorylated to form the acireductone 1,2-dihydroxy-3-keto-5-methylthiopentene (DHK-MTPene). The protein is Enolase-phosphatase E1 of Pseudomonas aeruginosa (strain UCBPP-PA14).